The primary structure comprises 1360 residues: DNA mismatch repair protein Msh6 (1360 aa).

Residues 1–84 (MSRQSTLYSF…GLRRSVAPAA (84 aa)) form a disordered region. 3 positions are modified to phosphoserine: Ser14, Ser41, and Ser43. Residues 33-51 (RAAAAPGASPSPGGDAAWS) are compositionally biased toward low complexity. An N6-acetyllysine modification is found at Lys70. Ser79, Ser91, Ser137, Ser200, Ser219, and Ser227 each carry phosphoserine. Positions 92–154 (PGDLVWAKME…KRLLKPYTGS (63 aa)) constitute a PWWP domain. A disordered region spans residues 195–362 (VCDEPSEPEE…SGGGDDSSRP (168 aa)). Acidic residues-rich tracts occupy residues 198-209 (EPSEPEEEEEME) and 219-230 (SEEDNEIESEEE). Basic residues predominate over residues 240–249 (RSSRQIKKRR). Residues Ser252, Ser254, Ser256, and Ser261 each carry the phosphoserine modification. A compositionally biased stretch (basic and acidic residues) spans 263 to 273 (VEFKPDTKEEG). Thr269 is subject to Phosphothreonine. Ser274, Ser275, Ser279, Ser280, and Ser309 each carry phosphoserine. Residues 320–351 (PSATKQATSISSETKNTLRAFSAPQNSESQAH) are compositionally biased toward polar residues. At Thr488 the chain carries Phosphothreonine. An N6-acetyllysine modification is found at Lys504. 2 positions are modified to phosphoserine: Ser830 and Ser935. Position 1010 is a phosphothreonine (Thr1010). Position 1134–1141 (1134–1141 (GPNMGGKS)) interacts with ATP.

This sequence belongs to the DNA mismatch repair MutS family. In terms of assembly, component of the DNA mismatch repair (MMR) complex composed at least of MSH2, MSH3, MSH6, PMS1 and MLH1. Heterodimer consisting of MSH2-MSH6 (MutS alpha). Forms a ternary complex with MutL alpha (MLH1-PMS1). Interacts with MCM9. Part of the BRCA1-associated genome surveillance complex (BASC), which contains BRCA1, MSH2, MSH6, MLH1, ATM, BLM, PMS2 and the RAD50-MRE11-NBS1 protein complex. This association could be a dynamic process changing throughout the cell cycle and within subnuclear domains. (Microbial infection) Interacts with herpes simplex virus 1 protein UL12. The N-terminus is blocked. Post-translationally, phosphorylated by PRKCZ, which may prevent MutS alpha degradation by the ubiquitin-proteasome pathway.

It is found in the nucleus. The protein resides in the chromosome. Component of the post-replicative DNA mismatch repair system (MMR). Heterodimerizes with MSH2 to form MutS alpha, which binds to DNA mismatches thereby initiating DNA repair. When bound, MutS alpha bends the DNA helix and shields approximately 20 base pairs, and recognizes single base mismatches and dinucleotide insertion-deletion loops (IDL) in the DNA. After mismatch binding, forms a ternary complex with the MutL alpha heterodimer, which is thought to be responsible for directing the downstream MMR events, including strand discrimination, excision, and resynthesis. ATP binding and hydrolysis play a pivotal role in mismatch repair functions. The ATPase activity associated with MutS alpha regulates binding similar to a molecular switch: mismatched DNA provokes ADP--&gt;ATP exchange, resulting in a discernible conformational transition that converts MutS alpha into a sliding clamp capable of hydrolysis-independent diffusion along the DNA backbone. This transition is crucial for mismatch repair. MutS alpha may also play a role in DNA homologous recombination repair. Recruited on chromatin in G1 and early S phase via its PWWP domain that specifically binds trimethylated 'Lys-36' of histone H3 (H3K36me3): early recruitment to chromatin to be replicated allowing a quick identification of mismatch repair to initiate the DNA mismatch repair reaction. The polypeptide is DNA mismatch repair protein Msh6 (Homo sapiens (Human)).